The primary structure comprises 285 residues: Bifunctional protein FolD (285 aa).

NADP(+)-binding positions include 166 to 168 (GAS) and isoleucine 232.

It belongs to the tetrahydrofolate dehydrogenase/cyclohydrolase family. In terms of assembly, homodimer.

It carries out the reaction (6R)-5,10-methylene-5,6,7,8-tetrahydrofolate + NADP(+) = (6R)-5,10-methenyltetrahydrofolate + NADPH. It catalyses the reaction (6R)-5,10-methenyltetrahydrofolate + H2O = (6R)-10-formyltetrahydrofolate + H(+). It participates in one-carbon metabolism; tetrahydrofolate interconversion. Its function is as follows. Catalyzes the oxidation of 5,10-methylenetetrahydrofolate to 5,10-methenyltetrahydrofolate and then the hydrolysis of 5,10-methenyltetrahydrofolate to 10-formyltetrahydrofolate. The polypeptide is Bifunctional protein FolD (Vibrio atlanticus (strain LGP32) (Vibrio splendidus (strain Mel32))).